The chain runs to 147 residues: uncharacterized protein (147 aa).

The protein to B.subtilis XkdM.

This is an uncharacterized protein from Bacillus subtilis (strain 168).